A 120-amino-acid polypeptide reads, in one-letter code: Large ribosomal subunit protein bL19 (120 aa).

It belongs to the bacterial ribosomal protein bL19 family.

In terms of biological role, this protein is located at the 30S-50S ribosomal subunit interface and may play a role in the structure and function of the aminoacyl-tRNA binding site. This Crocosphaera subtropica (strain ATCC 51142 / BH68) (Cyanothece sp. (strain ATCC 51142)) protein is Large ribosomal subunit protein bL19.